We begin with the raw amino-acid sequence, 833 residues long: Ventricular zone-expressed PH domain-containing protein homolog 1 (833 aa).

An interaction with TGFBR1 region spans residues 201–319; that stretch reads TELLALMSQL…TYLVSQLANM (119 aa). A disordered region spans residues 458–505; that stretch reads KGVGSDDGEDENRGDIPASISLSEIDPLGQGNDKLPFKTDTERSQLGE. Residues 492–502 are compositionally biased toward basic and acidic residues; sequence LPFKTDTERSQ. Positions 663–833 are interaction with TGFBR1; that stretch reads ESTFPQQKDL…RESREVTTYL (171 aa). The region spanning 716 to 819 is the PH domain; that stretch reads QPLIEGKLKE…WLQCINVAVA (104 aa).

The protein belongs to the MELT/VEPH family. As to quaternary structure, interacts with TGFBR1.

Its subcellular location is the cell membrane. Functionally, interacts with TGF-beta receptor type-1 (TGFBR1) and inhibits dissociation of activated SMAD2 from TGFBR1, impeding its nuclear accumulation and resulting in impaired TGF-beta signaling. May also affect FOXO, Hippo and Wnt signaling. This is Ventricular zone-expressed PH domain-containing protein homolog 1 (VEPH1) from Homo sapiens (Human).